The primary structure comprises 225 residues: NAD(P)H-quinone oxidoreductase subunit K, chloroplastic (225 aa).

Positions 43, 44, 108, and 139 each coordinate [4Fe-4S] cluster.

The protein belongs to the complex I 20 kDa subunit family. As to quaternary structure, NDH is composed of at least 16 different subunits, 5 of which are encoded in the nucleus. [4Fe-4S] cluster is required as a cofactor.

It is found in the plastid. Its subcellular location is the chloroplast thylakoid membrane. It catalyses the reaction a plastoquinone + NADH + (n+1) H(+)(in) = a plastoquinol + NAD(+) + n H(+)(out). It carries out the reaction a plastoquinone + NADPH + (n+1) H(+)(in) = a plastoquinol + NADP(+) + n H(+)(out). Functionally, NDH shuttles electrons from NAD(P)H:plastoquinone, via FMN and iron-sulfur (Fe-S) centers, to quinones in the photosynthetic chain and possibly in a chloroplast respiratory chain. The immediate electron acceptor for the enzyme in this species is believed to be plastoquinone. Couples the redox reaction to proton translocation, and thus conserves the redox energy in a proton gradient. This chain is NAD(P)H-quinone oxidoreductase subunit K, chloroplastic, found in Arabis hirsuta (Hairy rock-cress).